Here is a 384-residue protein sequence, read N- to C-terminus: 8-amino-7-oxononanoate synthase (384 aa).

Residue R21 coordinates substrate. Pyridoxal 5'-phosphate is bound at residue 108–109 (GF). Substrate is bound at residue H133. 3 residues coordinate pyridoxal 5'-phosphate: S179, H207, and T233. K236 is modified (N6-(pyridoxal phosphate)lysine). T352 provides a ligand contact to substrate.

Belongs to the class-II pyridoxal-phosphate-dependent aminotransferase family. BioF subfamily. In terms of assembly, homodimer. Pyridoxal 5'-phosphate serves as cofactor.

The catalysed reaction is 6-carboxyhexanoyl-[ACP] + L-alanine + H(+) = (8S)-8-amino-7-oxononanoate + holo-[ACP] + CO2. It functions in the pathway cofactor biosynthesis; biotin biosynthesis. In terms of biological role, catalyzes the decarboxylative condensation of pimeloyl-[acyl-carrier protein] and L-alanine to produce 8-amino-7-oxononanoate (AON), [acyl-carrier protein], and carbon dioxide. The polypeptide is 8-amino-7-oxononanoate synthase (Escherichia coli (strain SE11)).